The primary structure comprises 563 residues: Coiled-coil domain-containing protein 38 (563 aa).

A coiled-coil region spans residues threonine 128–glutamate 211. A disordered region spans residues aspartate 265–serine 310. Basic and acidic residues predominate over residues aspartate 269–serine 281. 2 coiled-coil regions span residues glutamine 361–leucine 415 and asparagine 454–glutamine 522. The segment at glutamine 543–serine 563 is disordered.

Interacts with CCDC42, CFAP53, IFT88 and ODF2. Interacts with CCDC146. Interacts with TEKT3. Interacts with ubiquitinated histone H2A. As to expression, expressed exclusively in testis where it is detected mainly in spermatogonia and spermatocytes (at protein level).

The protein resides in the cytoplasm. It localises to the cytoskeleton. The protein localises to the microtubule organizing center. It is found in the centrosome. Its subcellular location is the perinuclear region. The protein resides in the cell projection. It localises to the cilium. The protein localises to the flagellum. Essential for male fertility. Required for sperm flagellum biogenesis. Also required for acrosome biogenesis. Required for the attachment of developing acrosomes to the nucleus during spermiogenesis and may be involved in the transport of fibrous sheath components. The polypeptide is Coiled-coil domain-containing protein 38 (Ccdc38) (Mus musculus (Mouse)).